A 75-amino-acid chain; its full sequence is RNA-binding protein KhpA (75 aa).

A KH domain is found at K29–R75.

This sequence belongs to the KhpA RNA-binding protein family. Forms a complex with KhpB.

The protein resides in the cytoplasm. Its function is as follows. A probable RNA chaperone. Forms a complex with KhpB which binds to cellular RNA and controls its expression. Plays a role in peptidoglycan (PG) homeostasis and cell length regulation. The polypeptide is RNA-binding protein KhpA (Thermotoga maritima (strain ATCC 43589 / DSM 3109 / JCM 10099 / NBRC 100826 / MSB8)).